The following is a 350-amino-acid chain: Biotin synthase (350 aa).

In terms of domain architecture, Radical SAM core spans 63–281; it reads GDIELATLLS…IAVARITMPK (219 aa). Positions 78, 82, and 85 each coordinate [4Fe-4S] cluster. [2Fe-2S] cluster-binding residues include C122, C153, C213, and R285.

The protein belongs to the radical SAM superfamily. Biotin synthase family. Homodimer. Requires [4Fe-4S] cluster as cofactor. [2Fe-2S] cluster serves as cofactor.

The enzyme catalyses (4R,5S)-dethiobiotin + (sulfur carrier)-SH + 2 reduced [2Fe-2S]-[ferredoxin] + 2 S-adenosyl-L-methionine = (sulfur carrier)-H + biotin + 2 5'-deoxyadenosine + 2 L-methionine + 2 oxidized [2Fe-2S]-[ferredoxin]. It functions in the pathway cofactor biosynthesis; biotin biosynthesis; biotin from 7,8-diaminononanoate: step 2/2. Its function is as follows. Catalyzes the conversion of dethiobiotin (DTB) to biotin by the insertion of a sulfur atom into dethiobiotin via a radical-based mechanism. The protein is Biotin synthase of Acidovorax sp. (strain JS42).